The following is a 309-amino-acid chain: Sulfate adenylyltransferase subunit 2 (309 aa).

The protein belongs to the PAPS reductase family. CysD subfamily. Heterodimer composed of CysD, the smaller subunit, and CysN.

It catalyses the reaction sulfate + ATP + H(+) = adenosine 5'-phosphosulfate + diphosphate. It functions in the pathway sulfur metabolism; hydrogen sulfide biosynthesis; sulfite from sulfate: step 1/3. Functionally, with CysN forms the ATP sulfurylase (ATPS) that catalyzes the adenylation of sulfate producing adenosine 5'-phosphosulfate (APS) and diphosphate, the first enzymatic step in sulfur assimilation pathway. APS synthesis involves the formation of a high-energy phosphoric-sulfuric acid anhydride bond driven by GTP hydrolysis by CysN coupled to ATP hydrolysis by CysD. The polypeptide is Sulfate adenylyltransferase subunit 2 (Mycolicibacterium gilvum (strain PYR-GCK) (Mycobacterium gilvum (strain PYR-GCK))).